The sequence spans 150 residues: Cytochrome b5 type B (150 aa).

Positions 1-15 are excised as a propeptide; the sequence is MSGSMATAEASGSDG. The disordered stretch occupies residues 1–20; sequence MSGSMATAEASGSDGKGQEV. Residue Ser-23 is modified to Phosphoserine. One can recognise a Cytochrome b5 heme-binding domain in the interval 24 to 100; sequence VTYYRLEEVA…LKQYYIGDIH (77 aa). The residue at position 34 (Lys-34) is an N6-acetyllysine. A Phosphoserine modification is found at Ser-37. The residue at position 39 (Lys-39) is an N6-methyllysine. Positions 59 and 83 each coordinate heme. Ser-84 carries the post-translational modification Phosphoserine. Residues 123–140 traverse the membrane as a helical segment; the sequence is WAYWILPIIGAVLLGFLY.

The protein belongs to the cytochrome b5 family. Component of a complex composed of cytochrome b5, NADH-cytochrome b5 reductase (CYB5R3) and MTARC2.

The protein localises to the mitochondrion outer membrane. Its function is as follows. Cytochrome b5 is a membrane-bound hemoprotein functioning as an electron carrier for several membrane-bound oxygenases. The sequence is that of Cytochrome b5 type B (CYB5B) from Homo sapiens (Human).